A 281-amino-acid polypeptide reads, in one-letter code: Leukocyte antigen CD37 (281 aa).

The Cytoplasmic portion of the chain corresponds to 1–17 (MSAQESCLSLIKYFLFV). The chain crosses the membrane as a helical span at residues 18–38 (FNLFFFVLGSLIFCFGIWILI). Residues 39–59 (DKTSFVSFVGLAFVPLQIWSK) lie on the Extracellular side of the membrane. Residues 60-74 (VLAISGIFTMGIALL) traverse the membrane as a helical segment. At 75–85 (GCVGALKELRC) the chain is on the cytoplasmic side. The helical transmembrane segment at 86–111 (LLGLYFGMLLLLFATQITLGILISTQ) threads the bilayer. The Extracellular portion of the chain corresponds to 112 to 241 (RAQLERSLRD…QGLQKWLHNN (130 aa)). Residues Asn170, Asn183, and Asn188 are each glycosylated (N-linked (GlcNAc...) asparagine). The chain crosses the membrane as a helical span at residues 242 to 266 (LISIVGICLGVGLLELGFMTLSIFL). Over 267–281 (CRNLDHVYNRLARYR) the chain is Cytoplasmic.

The protein belongs to the tetraspanin (TM4SF) family. In terms of assembly, interacts with SCIMP. Interacts with SOCS3. Interacts with DECTIN1/CLEC7A. In terms of processing, tyrosine phosphorylated; leading to activation of downstream signaling pathways. B-lymphocytes. Antigen presenting cells.

The protein localises to the cell membrane. Its function is as follows. Structural component of specialized membrane microdomains known as tetraspanin-enriched microdomains (TERMs), which act as platforms for receptor clustering and signaling. Participates thereby in diverse biological functions such as cell signal transduction, adhesion, migration and protein trafficking. Upon ligand binding, two signaling pathways are activated, one acting through phosphorylation by LYN leading to cell death or a survival pathway with activation of GSK3B. Plays an essential role essential for clustering of integrin ITGA4/ITGB1 and promotes its mobility in the plasma membrane of B-cells. In turn, participates in ITGA4/ITGB1 integrin-mediated antiapoptotic signaling through AKT. Also plays a role in the migration of dendritic cells and neutrophils to draining lymph nodes, as well as in their integrin-mediated adhesion. Negatively regulates IL-6 responses through direct interaction with SOCS3 thereby preventing constitutive IL-6 signaling. Alternatively, inhibition of IL-6 signaling can also occur via interaction and stabilization of DECTIN1/CLEC7A at the cell membrane to inhibit its ability to promote the production of IL-6. The protein is Leukocyte antigen CD37 (CD37) of Homo sapiens (Human).